Here is a 127-residue protein sequence, read N- to C-terminus: Major sperm protein 63 (127 aa).

Ala2 carries the post-translational modification N-acetylalanine. Residues 9-126 (DIQTQPGTKI…RRKNLPIEYN (118 aa)) enclose the MSP domain.

As to expression, sperm.

It localises to the cell projection. The protein localises to the pseudopodium. Its subcellular location is the cytoplasm. The protein resides in the cytoskeleton. Functionally, central component in molecular interactions underlying sperm crawling. Forms an extensive filament system that extends from sperm villipoda, along the leading edge of the pseudopod. The sequence is that of Major sperm protein 63 (msp-63) from Caenorhabditis elegans.